Reading from the N-terminus, the 713-residue chain is uncharacterized protein (713 aa).

Residues Val686–Phe706 form a helical membrane-spanning segment.

Belongs to the plectrovirus ORF1 family.

Its subcellular location is the host membrane. This is an uncharacterized protein from Spiroplasma melliferum (SpV1).